The primary structure comprises 739 residues: Sulfate transporter (739 aa).

The interval 1 to 44 is disordered; sequence MSSENKEQHNLSPRDLPEEAYGFPPELPLGAQRGSSTDLRQFEP. A Phosphoserine modification is found at serine 12. The next 2 membrane-spanning stretches (helical) occupy residues 112-132 and 137-157; these read MMSG…YSLL and PIYG…FGTS. Asparagine 205 carries N-linked (GlcNAc...) asparagine glycosylation. 2 helical membrane passes run 227–247 and 255–275; these read FMAG…VSVY and GFVT…LLGL. N-linked (GlcNAc...) asparagine glycosylation is present at asparagine 357. 4 consecutive transmembrane segments (helical) span residues 378 to 398, 420 to 440, 455 to 475, and 524 to 544; these read LIPN…AITV, AIGF…SAAL, LSAI…APLF, and LLST…CVIL. Positions 568-719 constitute an STAS domain; that stretch reads TYKNLRSKSG…YSLSEAVAFA (152 aa).

The protein belongs to the SLC26A/SulP transporter (TC 2.A.53) family. N-glycosylated. In terms of tissue distribution, cartilage and intestine. Expressed in the kidney (at protein level).

It localises to the cell membrane. It is found in the apical cell membrane. The enzyme catalyses oxalate(in) + sulfate(out) = oxalate(out) + sulfate(in). It catalyses the reaction sulfate(out) + 2 chloride(in) = sulfate(in) + 2 chloride(out). It carries out the reaction oxalate(out) + 2 chloride(in) = oxalate(in) + 2 chloride(out). The catalysed reaction is bromide(in) + chloride(out) = bromide(out) + chloride(in). The enzyme catalyses nitrate(in) + chloride(out) = nitrate(out) + chloride(in). It catalyses the reaction iodide(in) + chloride(out) = iodide(out) + chloride(in). In terms of biological role, sulfate transporter which mediates sulfate uptake into chondrocytes in order to maintain adequate sulfation of proteoglycans which is needed for cartilage development. Mediates electroneutral anion exchange of sulfate ions for oxalate ions, sulfate and oxalate ions for chloride and/or hydroxyl ions and chloride ions for bromide, iodide and nitrate ions. The coupling of sulfate transport to both hydroxyl and chloride ions likely serves to ensure transport at both acidic pH when most sulfate uptake is mediated by sulfate-hydroxide exchange and alkaline pH when most sulfate uptake is mediated by sulfate-chloride exchange. Essential for chondrocyte proliferation, differentiation and cell size expansion. The sequence is that of Sulfate transporter (Slc26a2) from Rattus norvegicus (Rat).